The sequence spans 218 residues: Phosphoenolpyruvate guanylyltransferase (218 aa).

Residues Thr-151, Gly-166, and Ser-169 each contribute to the phosphoenolpyruvate site.

It belongs to the CofC family.

The enzyme catalyses phosphoenolpyruvate + GTP + H(+) = enolpyruvoyl-2-diphospho-5'-guanosine + diphosphate. Its pathway is cofactor biosynthesis; coenzyme F420 biosynthesis. Guanylyltransferase that catalyzes the activation of phosphoenolpyruvate (PEP) as enolpyruvoyl-2-diphospho-5'-guanosine, via the condensation of PEP with GTP. It is involved in the biosynthesis of coenzyme F420, a hydride carrier cofactor. The chain is Phosphoenolpyruvate guanylyltransferase from Mycobacterium sp. (strain KMS).